Consider the following 456-residue polypeptide: Bifunctional protein GlmU (456 aa).

A pyrophosphorylase region spans residues 1–229 (MLNSAMSVVI…ISETDGVNNR (229 aa)). UDP-N-acetyl-alpha-D-glucosamine is bound by residues 11–14 (LAAG), K25, Q76, 81–82 (GT), 103–105 (YGD), G140, E154, N169, and N227. D105 is a Mg(2+) binding site. N227 is a binding site for Mg(2+). Residues 230–250 (LQLSRLERIYQAEQAEKLLLS) are linker. The N-acetyltransferase stretch occupies residues 251 to 456 (GVMLRDPARF…QGWQRPVKKK (206 aa)). UDP-N-acetyl-alpha-D-glucosamine-binding residues include R333 and K351. The active-site Proton acceptor is the H363. The UDP-N-acetyl-alpha-D-glucosamine site is built by Y366 and N377. Residues A380, 386 to 387 (NY), S405, A423, and R440 contribute to the acetyl-CoA site.

This sequence in the N-terminal section; belongs to the N-acetylglucosamine-1-phosphate uridyltransferase family. In the C-terminal section; belongs to the transferase hexapeptide repeat family. Homotrimer. The cofactor is Mg(2+).

It localises to the cytoplasm. The enzyme catalyses alpha-D-glucosamine 1-phosphate + acetyl-CoA = N-acetyl-alpha-D-glucosamine 1-phosphate + CoA + H(+). It carries out the reaction N-acetyl-alpha-D-glucosamine 1-phosphate + UTP + H(+) = UDP-N-acetyl-alpha-D-glucosamine + diphosphate. It functions in the pathway nucleotide-sugar biosynthesis; UDP-N-acetyl-alpha-D-glucosamine biosynthesis; N-acetyl-alpha-D-glucosamine 1-phosphate from alpha-D-glucosamine 6-phosphate (route II): step 2/2. Its pathway is nucleotide-sugar biosynthesis; UDP-N-acetyl-alpha-D-glucosamine biosynthesis; UDP-N-acetyl-alpha-D-glucosamine from N-acetyl-alpha-D-glucosamine 1-phosphate: step 1/1. The protein operates within bacterial outer membrane biogenesis; LPS lipid A biosynthesis. In terms of biological role, catalyzes the last two sequential reactions in the de novo biosynthetic pathway for UDP-N-acetylglucosamine (UDP-GlcNAc). The C-terminal domain catalyzes the transfer of acetyl group from acetyl coenzyme A to glucosamine-1-phosphate (GlcN-1-P) to produce N-acetylglucosamine-1-phosphate (GlcNAc-1-P), which is converted into UDP-GlcNAc by the transfer of uridine 5-monophosphate (from uridine 5-triphosphate), a reaction catalyzed by the N-terminal domain. In Salmonella agona (strain SL483), this protein is Bifunctional protein GlmU.